An 86-amino-acid polypeptide reads, in one-letter code: MAHKKGTGSTRNGRDSNSKRLGVKAYGGEKVTAGSILIRQRGTSFLPGINVGKGKDDTLFALKEGTVSFESIKRNLRNRKRVNVVI.

The interval Met1–Lys24 is disordered.

It belongs to the bacterial ribosomal protein bL27 family.

The sequence is that of Large ribosomal subunit protein bL27 from Prochlorococcus marinus (strain MIT 9312).